Reading from the N-terminus, the 418-residue chain is Glutamyl-tRNA reductase (418 aa).

Substrate is bound by residues Thr49–Arg52, Ser109, Glu114–Gln116, and Gln120. The Nucleophile role is filled by Cys50. Gly189–Ile194 contributes to the NADP(+) binding site.

The protein belongs to the glutamyl-tRNA reductase family. In terms of assembly, homodimer.

It catalyses the reaction (S)-4-amino-5-oxopentanoate + tRNA(Glu) + NADP(+) = L-glutamyl-tRNA(Glu) + NADPH + H(+). It functions in the pathway porphyrin-containing compound metabolism; protoporphyrin-IX biosynthesis; 5-aminolevulinate from L-glutamyl-tRNA(Glu): step 1/2. In terms of biological role, catalyzes the NADPH-dependent reduction of glutamyl-tRNA(Glu) to glutamate 1-semialdehyde (GSA). The sequence is that of Glutamyl-tRNA reductase from Escherichia coli O7:K1 (strain IAI39 / ExPEC).